Here is a 128-residue protein sequence, read N- to C-terminus: Aspartate 1-decarboxylase (128 aa).

Catalysis depends on Ser25, which acts as the Schiff-base intermediate with substrate; via pyruvic acid. Position 25 is a pyruvic acid (Ser) (Ser25). Thr57 is a substrate binding site. Catalysis depends on Tyr58, which acts as the Proton donor. 73-75 (GAA) serves as a coordination point for substrate.

Belongs to the PanD family. As to quaternary structure, heterooctamer of four alpha and four beta subunits. Pyruvate is required as a cofactor. In terms of processing, is synthesized initially as an inactive proenzyme, which is activated by self-cleavage at a specific serine bond to produce a beta-subunit with a hydroxyl group at its C-terminus and an alpha-subunit with a pyruvoyl group at its N-terminus.

The protein resides in the cytoplasm. It catalyses the reaction L-aspartate + H(+) = beta-alanine + CO2. The protein operates within cofactor biosynthesis; (R)-pantothenate biosynthesis; beta-alanine from L-aspartate: step 1/1. Functionally, catalyzes the pyruvoyl-dependent decarboxylation of aspartate to produce beta-alanine. The chain is Aspartate 1-decarboxylase from Moorella thermoacetica (strain ATCC 39073 / JCM 9320).